We begin with the raw amino-acid sequence, 500 residues long: MTSTLQKNRAGAAFPFDNSYAGLPARFFAAQTPTAVAEPWLIKLNEPLAVELGLDVETLRRDGAAIFSGNLVPEGAEPLAMAYAGHQFGGFSPQLGDGRAILLGEVVDRSGRRYDIQLKGAGPTPFSRRGDGRAAIGPVLREYIISEAMFALGIPATRALAAVTTGEPVYREEVLPGAVFTRVAASHIRVGTFQFFAARGDTDGVRALADYVIDRHYPDLKDADNPYLSLYSAVSERQAALIARWLHVGFIHGVMNTDNMTVSGETIDFGPCAFMDNYDPATVFSSIDQHGRYAYANQPGIGQWNLARLGETLLPLIDEEPDGAVDKANAVIRAYGERFQAHWLAGMRGKIGLAGEEDGDLELVQALLSLMQAQGADFTLTFRRLSDLAGDAAAETAFAASFREPEACGPWLAQWRERLSRDPQTAAERATAMCRVNPAFIPRNHRVEQAIEAAVENGDFTLFEALLTVLAKPYEDQPGFAAYMEPPKPSERVLATFCGT.

8 residues coordinate ATP: Gly96, Gly98, Arg99, Lys119, Asp131, Gly132, Arg182, and Arg189. The active-site Proton acceptor is Asp258. Asn259 and Asp268 together coordinate Mg(2+). Residue Asp268 coordinates ATP.

The protein belongs to the SELO family. Mg(2+) serves as cofactor. Requires Mn(2+) as cofactor.

It carries out the reaction L-seryl-[protein] + ATP = 3-O-(5'-adenylyl)-L-seryl-[protein] + diphosphate. The enzyme catalyses L-threonyl-[protein] + ATP = 3-O-(5'-adenylyl)-L-threonyl-[protein] + diphosphate. The catalysed reaction is L-tyrosyl-[protein] + ATP = O-(5'-adenylyl)-L-tyrosyl-[protein] + diphosphate. It catalyses the reaction L-histidyl-[protein] + UTP = N(tele)-(5'-uridylyl)-L-histidyl-[protein] + diphosphate. It carries out the reaction L-seryl-[protein] + UTP = O-(5'-uridylyl)-L-seryl-[protein] + diphosphate. The enzyme catalyses L-tyrosyl-[protein] + UTP = O-(5'-uridylyl)-L-tyrosyl-[protein] + diphosphate. Nucleotidyltransferase involved in the post-translational modification of proteins. It can catalyze the addition of adenosine monophosphate (AMP) or uridine monophosphate (UMP) to a protein, resulting in modifications known as AMPylation and UMPylation. This is Protein nucleotidyltransferase YdiU from Rhizobium leguminosarum bv. trifolii (strain WSM2304).